The sequence spans 540 residues: CUB domain-containing protein 2 (540 aa).

The N-terminal stretch at 1–24 (MLAELGACLLLAMVLLDSDPGTQA) is a signal peptide. At 25-516 (MEGVKCGGVL…GTMVTQDTSD (492 aa)) the chain is on the extracellular side. 6 disulfides stabilise this stretch: Cys30–Cys56, Cys83–Cys106, Cys145–Cys171, Cys198–Cys218, Cys257–Cys283, and Cys314–Cys336. 3 consecutive CUB domains span residues 30–143 (CGGV…YQKD), 145–255 (CGGV…YFSG), and 257–373 (CQEV…YIGV). N-linked (GlcNAc...) asparagine glycosylation occurs at Asn40. Asn267 carries N-linked (GlcNAc...) asparagine glycosylation. Residues Asn377, Asn435, and Asn436 are each glycosylated (N-linked (GlcNAc...) asparagine). A helical membrane pass occupies residues 517 to 537 (IVFLGLCILAGVLMIIAIVVL). The Cytoplasmic portion of the chain corresponds to 538–540 (MLL).

The protein resides in the membrane. The protein is CUB domain-containing protein 2 (Cdcp2) of Mus musculus (Mouse).